Consider the following 392-residue polypeptide: Galactose-1-phosphate uridylyltransferase (392 aa).

Cys52 and Cys55 together coordinate Zn(2+). Residues Ala61 and 77–78 contribute to the UDP-alpha-D-glucose site; that span reads ND. His126 contributes to the Zn(2+) binding site. UDP-alpha-D-glucose is bound at residue Asn194. His205 is a Zn(2+) binding site. The active-site Tele-UMP-histidine intermediate is His207. Residue Gln209 coordinates UDP-alpha-D-glucose. Residues Glu223, His323, His340, and His342 each coordinate Fe cation. UDP-alpha-D-glucose is bound by residues 355 to 358 and 360 to 361; these read KFLV and YE.

Belongs to the galactose-1-phosphate uridylyltransferase type 1 family. Homodimer. Requires Zn(2+) as cofactor.

It catalyses the reaction alpha-D-galactose 1-phosphate + UDP-alpha-D-glucose = alpha-D-glucose 1-phosphate + UDP-alpha-D-galactose. The protein operates within carbohydrate metabolism; galactose metabolism. The sequence is that of Galactose-1-phosphate uridylyltransferase (gal-7) from Neurospora crassa (strain ATCC 24698 / 74-OR23-1A / CBS 708.71 / DSM 1257 / FGSC 987).